Reading from the N-terminus, the 183-residue chain is Adenine phosphoribosyltransferase 3 (183 aa).

It belongs to the purine/pyrimidine phosphoribosyltransferase family. As to quaternary structure, homodimer.

Its subcellular location is the cytoplasm. The enzyme catalyses AMP + diphosphate = 5-phospho-alpha-D-ribose 1-diphosphate + adenine. It functions in the pathway purine metabolism; AMP biosynthesis via salvage pathway; AMP from adenine: step 1/1. Catalyzes a salvage reaction resulting in the formation of AMP, that is energically less costly than de novo synthesis. May contribute to the recycling of adenine into adenylate nucleotides and the inactivation of cytokinins by phosphoribosylation. Possesses low activity toward adenine and cytokinins. This is Adenine phosphoribosyltransferase 3 (APT3) from Arabidopsis thaliana (Mouse-ear cress).